The sequence spans 67 residues: Large ribosomal subunit protein bL35 (67 aa).

Belongs to the bacterial ribosomal protein bL35 family.

The protein is Large ribosomal subunit protein bL35 of Brachyspira hyodysenteriae (strain ATCC 49526 / WA1).